Here is a 442-residue protein sequence, read N- to C-terminus: tRNA-2-methylthio-N(6)-dimethylallyladenosine synthase (442 aa).

In terms of domain architecture, MTTase N-terminal spans 5 to 122 (KRIFIKTFGC…LPDMIESKRR (118 aa)). Residues cysteine 14, cysteine 51, cysteine 85, cysteine 159, cysteine 163, and cysteine 166 each coordinate [4Fe-4S] cluster. A Radical SAM core domain is found at 145–377 (RVEGAAAFLS…QALNEAQGKA (233 aa)). A TRAM domain is found at 380–442 (ASMVGSIQRV…LSHTLRGELV (63 aa)).

This sequence belongs to the methylthiotransferase family. MiaB subfamily. Monomer. The cofactor is [4Fe-4S] cluster.

It is found in the cytoplasm. The catalysed reaction is N(6)-dimethylallyladenosine(37) in tRNA + (sulfur carrier)-SH + AH2 + 2 S-adenosyl-L-methionine = 2-methylsulfanyl-N(6)-dimethylallyladenosine(37) in tRNA + (sulfur carrier)-H + 5'-deoxyadenosine + L-methionine + A + S-adenosyl-L-homocysteine + 2 H(+). Functionally, catalyzes the methylthiolation of N6-(dimethylallyl)adenosine (i(6)A), leading to the formation of 2-methylthio-N6-(dimethylallyl)adenosine (ms(2)i(6)A) at position 37 in tRNAs that read codons beginning with uridine. The sequence is that of tRNA-2-methylthio-N(6)-dimethylallyladenosine synthase from Methylobacillus flagellatus (strain ATCC 51484 / DSM 6875 / VKM B-1610 / KT).